A 515-amino-acid polypeptide reads, in one-letter code: Bifunctional purine biosynthesis protein PurH (515 aa).

One can recognise an MGS-like domain in the interval M1–V145.

The protein belongs to the PurH family.

The enzyme catalyses (6R)-10-formyltetrahydrofolate + 5-amino-1-(5-phospho-beta-D-ribosyl)imidazole-4-carboxamide = 5-formamido-1-(5-phospho-D-ribosyl)imidazole-4-carboxamide + (6S)-5,6,7,8-tetrahydrofolate. The catalysed reaction is IMP + H2O = 5-formamido-1-(5-phospho-D-ribosyl)imidazole-4-carboxamide. It functions in the pathway purine metabolism; IMP biosynthesis via de novo pathway; 5-formamido-1-(5-phospho-D-ribosyl)imidazole-4-carboxamide from 5-amino-1-(5-phospho-D-ribosyl)imidazole-4-carboxamide (10-formyl THF route): step 1/1. The protein operates within purine metabolism; IMP biosynthesis via de novo pathway; IMP from 5-formamido-1-(5-phospho-D-ribosyl)imidazole-4-carboxamide: step 1/1. This chain is Bifunctional purine biosynthesis protein PurH, found in Streptococcus thermophilus (strain ATCC BAA-491 / LMD-9).